A 398-amino-acid polypeptide reads, in one-letter code: Unsaturated chondroitin disaccharide hydrolase (398 aa).

The Nucleophile role is filled by D115. The substrate site is built by D115, D175, G233, T235, R247, W251, S365, and S368. Residue D175 is the Proton donor of the active site.

Belongs to the glycosyl hydrolase 88 family. In terms of assembly, monomer.

The catalysed reaction is beta-D-4-deoxy-Delta(4)-GlcpA-(1-&gt;3)-beta-D-GalpNAc6S + H2O = N-acetyl-beta-D-galactosamine 6-sulfate + 5-dehydro-4-deoxy-D-glucuronate. Its function is as follows. Catalyzes the hydrolysis of unsaturated hyaluronate and chondroitin disaccharides. Also degrades unsaturated heparin disaccharides. Releases 4-deoxy-4,5-didehydro D-glucuronic acid or 4-deoxy-4,5-didehydro L-iduronic acid from chondroitin disaccharides, hyaluronan disaccharides and heparin disaccharides and cleaves both glycosidic (1-&gt;3) and (1-&gt;4) bonds. Prefers sulfated glycosaminoglycans compared to unsulfated glycosaminoglycans. Probably required for mammalian cells invasion through the degradation of extracellular sulfated glycosaminoglycans such as chondroitin and hyaluronan. The protein is Unsaturated chondroitin disaccharide hydrolase of Streptococcus agalactiae serotype III (strain NEM316).